A 334-amino-acid polypeptide reads, in one-letter code: Glyceraldehyde-3-phosphate dehydrogenase 2 (334 aa).

NAD(+) contacts are provided by residues Arg12–Ile13, Asp35, and Arg79. D-glyceraldehyde 3-phosphate contacts are provided by residues Ser152–Thr154, Thr183, Arg198, Ser211–Gly212, and Arg234. Cys153 acts as the Nucleophile in catalysis. An NAD(+)-binding site is contributed by Asn315.

Belongs to the glyceraldehyde-3-phosphate dehydrogenase family. As to quaternary structure, homotetramer.

The protein localises to the cytoplasm. The enzyme catalyses D-glyceraldehyde 3-phosphate + phosphate + NAD(+) = (2R)-3-phospho-glyceroyl phosphate + NADH + H(+). It participates in carbohydrate degradation; glycolysis; pyruvate from D-glyceraldehyde 3-phosphate: step 1/5. With respect to regulation, inhibited by pentalenolactone (PL). Catalyzes the oxidative phosphorylation of glyceraldehyde 3-phosphate (G3P) to 1,3-bisphosphoglycerate (BPG) using the cofactor NAD. The first reaction step involves the formation of a hemiacetal intermediate between G3P and a cysteine residue, and this hemiacetal intermediate is then oxidized to a thioester, with concomitant reduction of NAD to NADH. The reduced NADH is then exchanged with the second NAD, and the thioester is attacked by a nucleophilic inorganic phosphate to produce BPG. In Streptomyces arenae, this protein is Glyceraldehyde-3-phosphate dehydrogenase 2 (gap2).